A 248-amino-acid chain; its full sequence is Putative TrmH family tRNA/rRNA methyltransferase (248 aa).

S-adenosyl-L-methionine is bound by residues glycine 196, isoleucine 216, and leucine 225.

The protein belongs to the class IV-like SAM-binding methyltransferase superfamily. RNA methyltransferase TrmH family.

In Staphylococcus aureus (strain Mu50 / ATCC 700699), this protein is Putative TrmH family tRNA/rRNA methyltransferase.